The chain runs to 254 residues: Imidazole glycerol phosphate synthase subunit HisF (254 aa).

Active-site residues include Asp-12 and Asp-131.

It belongs to the HisA/HisF family. In terms of assembly, heterodimer of HisH and HisF.

It is found in the cytoplasm. The enzyme catalyses 5-[(5-phospho-1-deoxy-D-ribulos-1-ylimino)methylamino]-1-(5-phospho-beta-D-ribosyl)imidazole-4-carboxamide + L-glutamine = D-erythro-1-(imidazol-4-yl)glycerol 3-phosphate + 5-amino-1-(5-phospho-beta-D-ribosyl)imidazole-4-carboxamide + L-glutamate + H(+). It functions in the pathway amino-acid biosynthesis; L-histidine biosynthesis; L-histidine from 5-phospho-alpha-D-ribose 1-diphosphate: step 5/9. In terms of biological role, IGPS catalyzes the conversion of PRFAR and glutamine to IGP, AICAR and glutamate. The HisF subunit catalyzes the cyclization activity that produces IGP and AICAR from PRFAR using the ammonia provided by the HisH subunit. This Herminiimonas arsenicoxydans protein is Imidazole glycerol phosphate synthase subunit HisF.